The primary structure comprises 251 residues: Aliphatic sulfonates import ATP-binding protein SsuB (251 aa).

In terms of domain architecture, ABC transporter spans 3-231; the sequence is VSIDGVSKYF…PRSKTSESFQ (229 aa). 39–46 serves as a coordination point for ATP; sequence GPSGCGKS.

The protein belongs to the ABC transporter superfamily. Aliphatic sulfonates importer (TC 3.A.1.17.2) family. In terms of assembly, the complex is composed of two ATP-binding proteins (SsuB), two transmembrane proteins (SsuC) and a solute-binding protein (SsuA).

It is found in the cell membrane. It carries out the reaction ATP + H2O + aliphatic sulfonate-[sulfonate-binding protein]Side 1 = ADP + phosphate + aliphatic sulfonateSide 2 + [sulfonate-binding protein]Side 1.. Functionally, part of the ABC transporter complex SsuABC involved in aliphatic sulfonates import. Responsible for energy coupling to the transport system. In Bacillus cereus (strain ATCC 10987 / NRS 248), this protein is Aliphatic sulfonates import ATP-binding protein SsuB.